Consider the following 793-residue polypeptide: Short transient receptor potential channel 1 (793 aa).

The disordered stretch occupies residues 1–30 (MMAALYPSTDLSGASSSSLPSSPSSSSPNE). Residues 1 to 345 (MMAALYPSTD…FGQMSGYRRK (345 aa)) lie on the Cytoplasmic side of the membrane. Positions 15–28 (SSSSLPSSPSSSSP) are enriched in low complexity. 4 ANK repeats span residues 46–75 (LNEK…SGDL), 83–109 (LGRN…YGCQ), 111–156 (ADAL…EYST), and 158–180 (MDVA…MLLK). Residues His-189, Cys-193, Cys-195, and Cys-198 each contribute to the Zn(2+) site. The segment at residues 346–379 (PTCKKIMTVLTVGIFWPVLSLCYLIAPKSQFGRI) is an intramembrane region (discontinuously helical). Over 380–386 (IHTPFMK) the chain is Cytoplasmic. Residues 387-404 (FIIHGASYFTFLLLLNLY) form a helical membrane-spanning segment. The Extracellular segment spans residues 405–422 (SLVYNEDKKNTMGPALER). The helical transmembrane segment at 423–439 (IDYLLILWIIGMIWSDI) threads the bilayer. Over 440 to 455 (KRLWYEGLEDFLEESR) the chain is Cytoplasmic. The helical transmembrane segment at 456–475 (NQLSFVMNSLYLATFALKVV) threads the bilayer. Over 476–496 (AHNKFHDFADRKDWDAFHPTL) the chain is Extracellular. The chain crosses the membrane as a helical span at residues 497–517 (VAEGLFAFANVLSYLRLFFMY). Over 518–536 (TTSSILGPLQISMGQMLQD) the chain is Cytoplasmic. A helical transmembrane segment spans residues 537–558 (FGKFLGMFLLVLFSFTIGLTQL). At 559–623 (YDKGYTSKEQ…GEELQSFVGA (65 aa)) the chain is on the extracellular side. The cysteines at positions 571 and 576 are disulfide-linked. A helical membrane pass occupies residues 624-644 (VIVGTYNVVVVIVLTKLLVAM). Residues 645–793 (LHKSFQLIAN…SKYAMFYPRN (149 aa)) are Cytoplasmic-facing.

It belongs to the transient receptor (TC 1.A.4) family. STrpC subfamily. TRPC1 sub-subfamily. As to quaternary structure, heterotetramer with TRPC4 and/or TRPC5. Forms a heteromeric ion channel with TRPC4, with a 1:3 TRPC1:TRPC4 stoichiometry. Unlike other TRP channel proteins, does not form a homomeric channel. Interacts with TRPC4AP. Interacts with ITPR3. Interacts with MX1 and RNF24. Interacts with FKBP4. Interacts with PLSCR1. Interacts with PKD2L2. Forms a heterotetramer with PKD2 with a 2:2 stoichiometry; has distinct channel properties separate from PKD2 or TRPC1 homomers alone. Interacts with isoform 2 of TRPC3. In terms of processing, activation of PRKCA induces phosphorylation of TRPC1 and subsequent Ca2+ entry into cells. In terms of tissue distribution, seems to be ubiquitous.

The protein resides in the cell membrane. It carries out the reaction Ca(2+)(in) = Ca(2+)(out). The catalysed reaction is Na(+)(in) = Na(+)(out). It catalyses the reaction Li(+)(in) = Li(+)(out). The enzyme catalyses Cs(+)(in) = Cs(+)(out). May be operated by a phosphatidylinositol second messenger system activated by receptor tyrosine kinases or G-protein coupled receptors. Also activated by intracellular calcium store depletion. Inhibited by xanthine-based inhibitor Pico145. In terms of biological role, forms a receptor-activated non-selective calcium permeant cation channel. Forms a heteromeric ion channel with TRPC4 or TRPC5 that has reduced calcium permeability compared to the homomeric TRPC4 or TRPC5 channel. Also permeable to monovalent ions including sodium, lithium and cesium ions. Forms a receptor-activated non-selective calcium permeant cation channel. Also activated by intracellular calcium store depletion. This Homo sapiens (Human) protein is Short transient receptor potential channel 1 (TRPC1).